We begin with the raw amino-acid sequence, 121 residues long: Small ribosomal subunit protein uS13 (121 aa).

Positions 91–121 (HRMSLPVRGQRTRTNARTRRGSRKTVAGRKK) are disordered. Over residues 100 to 121 (QRTRTNARTRRGSRKTVAGRKK) the composition is skewed to basic residues.

It belongs to the universal ribosomal protein uS13 family. In terms of assembly, part of the 30S ribosomal subunit. Forms a loose heterodimer with protein S19. Forms two bridges to the 50S subunit in the 70S ribosome.

Located at the top of the head of the 30S subunit, it contacts several helices of the 16S rRNA. In the 70S ribosome it contacts the 23S rRNA (bridge B1a) and protein L5 of the 50S subunit (bridge B1b), connecting the 2 subunits; these bridges are implicated in subunit movement. Contacts the tRNAs in the A and P-sites. This is Small ribosomal subunit protein uS13 from Prochlorococcus marinus (strain MIT 9301).